The following is a 78-amino-acid chain: Large ribosomal subunit protein bL28 (78 aa).

The tract at residues Met1–Ala21 is disordered.

This sequence belongs to the bacterial ribosomal protein bL28 family.

This is Large ribosomal subunit protein bL28 from Yersinia enterocolitica serotype O:8 / biotype 1B (strain NCTC 13174 / 8081).